The chain runs to 243 residues: NADH-ubiquinone oxidoreductase chain 6 (243 aa).

Helical transmembrane passes span 16 to 36 (ISSV…SVIV), 41 to 61 (IISV…LILL), 69 to 89 (AYLI…LMLI), 104 to 124 (IPLT…LLPY), and 201 to 221 (IWLF…IVII).

Belongs to the complex I subunit 6 family.

It localises to the mitochondrion membrane. The catalysed reaction is a ubiquinone + NADH + 5 H(+)(in) = a ubiquinol + NAD(+) + 4 H(+)(out). Core subunit of the mitochondrial membrane respiratory chain NADH dehydrogenase (Complex I) that is believed to belong to the minimal assembly required for catalysis. Complex I functions in the transfer of electrons from NADH to the respiratory chain. The immediate electron acceptor for the enzyme is believed to be ubiquinone. The polypeptide is NADH-ubiquinone oxidoreductase chain 6 (ndh-6) (Neurospora crassa (strain ATCC 24698 / 74-OR23-1A / CBS 708.71 / DSM 1257 / FGSC 987)).